Reading from the N-terminus, the 428-residue chain is GTPase Obg (428 aa).

Positions 1–158 (MFIDKAKVFI…LSIVLELKLL (158 aa)) constitute an Obg domain. The OBG-type G domain maps to 159–331 (ADVGLLGFPN…VIKEAARMLK (173 aa)). Residues 165–172 (GFPNVGKS), 190–194 (FTTLK), 212–215 (DIPG), 282–285 (NKSD), and 312–314 (SAA) contribute to the GTP site. Ser172 and Thr192 together coordinate Mg(2+). One can recognise an OCT domain in the interval 345 to 428 (MYIPEEKRFT…LNDFEFEYLL (84 aa)).

Belongs to the TRAFAC class OBG-HflX-like GTPase superfamily. OBG GTPase family. In terms of assembly, monomer. It depends on Mg(2+) as a cofactor.

The protein resides in the cytoplasm. In terms of biological role, an essential GTPase which binds GTP, GDP and possibly (p)ppGpp with moderate affinity, with high nucleotide exchange rates and a fairly low GTP hydrolysis rate. Plays a role in control of the cell cycle, stress response, ribosome biogenesis and in those bacteria that undergo differentiation, in morphogenesis control. The polypeptide is GTPase Obg (Clostridium botulinum (strain Eklund 17B / Type B)).